The chain runs to 245 residues: Protein FAM133B (245 aa).

Disordered regions lie at residues 19–38 (SRGP…NRPR) and 69–245 (WKKE…SDSP). A compositionally biased stretch (basic and acidic residues) spans 69–80 (WKKELEKHREKL). At serine 82 the chain carries Phosphoserine. Positions 89 to 102 (KKRQKKKKEKKKSG) are enriched in basic residues. A compositionally biased stretch (low complexity) spans 103-119 (RYSSSSSSSSDSSSSSS). Basic residues predominate over residues 128–140 (QTKRRKKKKSHCH). A compositionally biased stretch (basic and acidic residues) spans 165 to 176 (KDITEREKDTKG). Phosphoserine is present on residues serine 190, serine 191, serine 193, and serine 195. Over residues 209-219 (SGEERERTTDK) the composition is skewed to basic and acidic residues. Residues 220-237 (AKKRRKHKKHSKKKKKKA) show a composition bias toward basic residues.

This sequence belongs to the FAM133 family.

The polypeptide is Protein FAM133B (Fam133b) (Rattus norvegicus (Rat)).